Reading from the N-terminus, the 1107-residue chain is Unconventional myosin-Ie (1107 aa).

The region spanning 19–692 (SGVDDMVLLS…SLFLLEEMRE (674 aa)) is the Myosin motor domain. 112–119 (GESGAGKT) contributes to the ATP binding site. An actin-binding region spans residues 581 to 591 (PHYIRCIKPNE). The region spanning 695 to 724 (YDGYARVIQKTWRKFVARKKYVQMREEASD) is the IQ domain. Residues 730 to 922 (KERRRNSINR…NKVLQVSIGP (193 aa)) form the TH1 domain. The segment at 919 to 1052 (SIGPGLPKNS…KPQPKPKPQV (134 aa)) is disordered. Polar residues-rich tracts occupy residues 979 to 989 (NQRSNQKSLYT) and 998 to 1012 (RQQS…QTPE). Phosphoserine is present on serine 1001. Positions 1034 to 1051 (RPPPAGGRPKPQPKPKPQ) are enriched in pro residues. In terms of domain architecture, SH3 spans 1050-1107 (PQVPQCKALYAYDAQDTDELSFNANDIIDIIKEDPSGWWTGRLRGKQGLFPNNYVTKI).

This sequence belongs to the TRAFAC class myosin-kinesin ATPase superfamily. Myosin family. As to quaternary structure, interacts with CALM and F-actin. Interacts (via SH3 domain) with SYNJ1, DNM1 and DNM2. Interacts with ARL14EP. Interacts with CARMIL1. As to expression, detected in kidney glomeruli (at protein level). Detected in utricle.

It localises to the cytoplasm. The protein localises to the cell junction. It is found in the cytoplasmic vesicle. The protein resides in the clathrin-coated vesicle. Its subcellular location is the cytoskeleton. Myosins are actin-based motor molecules with ATPase activity. Unconventional myosins serve in intracellular movements. Their highly divergent tails bind to membranous compartments, which are then moved relative to actin filaments. Binds to membranes containing anionic phospholipids via its tail domain. Involved in clathrin-mediated endocytosis and intracellular movement of clathrin-coated vesicles. Required for normal morphology of the glomerular basement membrane, normal development of foot processes by kidney podocytes and normal kidney function. In dendritic cells, may control the movement of class II-containing cytoplasmic vesicles along the actin cytoskeleton by connecting them with the actin network via ARL14EP and ARL14. This chain is Unconventional myosin-Ie (Myo1e), found in Mus musculus (Mouse).